Reading from the N-terminus, the 609-residue chain is MSPPRDRVDAYYKDNFQFKNTRVVLNKEQLLIERPCMLLTVLFVMFLSLVGLLAIAGIRLHRAAVNTAKINNDLTTSIDITKSIEYQVKDVLTPLFKIIGDEVGLRTPQRFTDLTKFISDKIKFLNPDKEYDFRDINWCINPPERIKIDYDQYCAHTAAEDLITMLVNSSLTGTTVLRTSLVNLRRNCTGPTTTKGQFSNISLTLSGIYSGRGYNISSMITITGKGMYGSTYLVGKYNQRARRPSIVWQQDYRVFEVGIIRELGVGTPVFHMTNYLELPRQPELETCMLALGESKLAALCLADSPVALHYGRVGDDNKIRFVKLGVWASPADRDTLATLSAIDPTLDGLYITTHRGIIAAGTAIWAVPVTRTDDQVKMGKCRLEACRDRPPPFCNSTDWEPLEAGRIPAYGVLTIKLGLADEPKVDIISEFGPLITHDSGMDLYTSFDGTKYWLTTPPLQNSALGTVNTLVLEPSLKISPNILTLPIRSGGGDCYTPTYLSDRADDDVKLSSNLVILPSRDLQYVSATYDISRVEHAIVYHIYSTGRLSSYYYPFKLPIKGDPVSLQIECFPWDRKLWCHHFCSVIDSGTGEQVTHIGVVGIKITCNGK.

At 1–34 the chain is on the intravirion side; that stretch reads MSPPRDRVDAYYKDNFQFKNTRVVLNKEQLLIER. A helical; Signal-anchor for type II membrane protein membrane pass occupies residues 35–58; that stretch reads PCMLLTVLFVMFLSLVGLLAIAGI. Residues 59–609 are Virion surface-facing; that stretch reads RLHRAAVNTA…VGIKITCNGK (551 aa). N-linked (GlcNAc...) asparagine; by host glycans are attached at residues Asn-168, Asn-187, Asn-200, Asn-215, and Asn-395.

The protein belongs to the paramyxoviruses hemagglutinin-neuraminidase family. Non-sialidase subfamily.

It localises to the virion membrane. The protein localises to the host membrane. Functionally, attaches the virus to cell receptors and thereby initiating infection. Binding of H protein to the receptor induces a conformational change that allows the F protein to trigger virion/cell membranes fusion. Down-regulates human MCP/CD46 cell surface expression. This chain is Hemagglutinin glycoprotein (H), found in Rinderpest virus (strain Kabete O) (RDV).